The following is a 75-amino-acid chain: RNA-binding protein Hfq (75 aa).

Residues 9–69 (DQFLNQLRKE…ISTFAPERNI (61 aa)) enclose the Sm domain.

The protein belongs to the Hfq family. Homohexamer.

In terms of biological role, RNA chaperone that binds small regulatory RNA (sRNAs) and mRNAs to facilitate mRNA translational regulation in response to envelope stress, environmental stress and changes in metabolite concentrations. Also binds with high specificity to tRNAs. This is RNA-binding protein Hfq from Geobacillus kaustophilus (strain HTA426).